Consider the following 102-residue polypeptide: Large ribosomal subunit protein bL21 (102 aa).

The protein belongs to the bacterial ribosomal protein bL21 family. In terms of assembly, part of the 50S ribosomal subunit. Contacts protein L20.

Its function is as follows. This protein binds to 23S rRNA in the presence of protein L20. In Desulfovibrio desulfuricans (strain ATCC 27774 / DSM 6949 / MB), this protein is Large ribosomal subunit protein bL21.